Reading from the N-terminus, the 168-residue chain is Large ribosomal subunit protein uL10 (168 aa).

Belongs to the universal ribosomal protein uL10 family. Part of the ribosomal stalk of the 50S ribosomal subunit. The N-terminus interacts with L11 and the large rRNA to form the base of the stalk. The C-terminus forms an elongated spine to which L12 dimers bind in a sequential fashion forming a multimeric L10(L12)X complex.

In terms of biological role, forms part of the ribosomal stalk, playing a central role in the interaction of the ribosome with GTP-bound translation factors. The protein is Large ribosomal subunit protein uL10 (rplJ) of Mycoplasmopsis pulmonis (strain UAB CTIP) (Mycoplasma pulmonis).